A 545-amino-acid chain; its full sequence is Chaperonin GroEL (545 aa).

ATP contacts are provided by residues 29–32, 86–90, Gly413, 478–480, and Asp494; these read TIGP, DGTTT, and NAA.

This sequence belongs to the chaperonin (HSP60) family. As to quaternary structure, forms a cylinder of 14 subunits composed of two heptameric rings stacked back-to-back. Interacts with the co-chaperonin GroES.

Its subcellular location is the cytoplasm. It carries out the reaction ATP + H2O + a folded polypeptide = ADP + phosphate + an unfolded polypeptide.. Together with its co-chaperonin GroES, plays an essential role in assisting protein folding. The GroEL-GroES system forms a nano-cage that allows encapsulation of the non-native substrate proteins and provides a physical environment optimized to promote and accelerate protein folding. This chain is Chaperonin GroEL, found in Exiguobacterium sibiricum (strain DSM 17290 / CCUG 55495 / CIP 109462 / JCM 13490 / 255-15).